The following is a 403-amino-acid chain: uncharacterized protein (403 aa).

A compositionally biased stretch (polar residues) spans 55-88; sequence LTGSPNPQATPKQENKSNFFSEKQSVRENGNSSA. The segment at 55 to 95 is disordered; the sequence is LTGSPNPQATPKQENKSNFFSEKQSVRENGNSSAGEKKQKW. A Phosphoserine modification is found at Ser58. Residues 113–177 enclose the J domain; that stretch reads QYYEILDLKK…NLRAHYDRTG (65 aa). A helical transmembrane segment spans residues 263-283; the sequence is SIFYQLLPLIVVILFAFLSNF.

The protein localises to the endoplasmic reticulum membrane. This is an uncharacterized protein from Schizosaccharomyces pombe (strain 972 / ATCC 24843) (Fission yeast).